Here is a 135-residue protein sequence, read N- to C-terminus: Interleukin-4 (135 aa).

The N-terminal stretch at 1–24 is a signal peptide; the sequence is MGLTSQLIPVLVCLLVCTSHFVHG. Cystine bridges form between Cys-27-Cys-135, Cys-48-Cys-85, and Cys-70-Cys-105. An N-linked (GlcNAc...) asparagine glycan is attached at Asn-62.

The protein belongs to the IL-4/IL-13 family.

The protein resides in the secreted. Its function is as follows. Participates in at least several B-cell activation processes as well as of other cell types. It is a costimulator of DNA-synthesis. It induces the expression of class II MHC molecules on resting B-cells. It enhances both secretion and cell surface expression of IgE and IgG1. It also regulates the expression of the low affinity Fc receptor for IgE (CD23) on both lymphocytes and monocytes. Positively regulates IL31RA expression in macrophages. Stimulates autophagy in dendritic cells by interfering with mTORC1 signaling and through the induction of RUFY4. This chain is Interleukin-4 (IL4), found in Bos taurus (Bovine).